The chain runs to 310 residues: Protoheme IX farnesyltransferase (310 aa).

8 helical membrane-spanning segments follow: residues 31–51 (VIELLLVTAIPAMLLADRGSV), 53–73 (PLLILNTLIGGMLAAAGANTL), 102–122 (NALIFGLVLSVGSFFWLWGTS), 124–144 (LLSGLLAVATIAFYVFVYTLL), 149–169 (TSQNVVWGGAAGCMPVMIGWS), 170–190 (AVTGTIQWPALVMFAIIFFWT), 242–262 (LATGWLYASVAVLAGTWFLVM), and 289–309 (LAVVFAALAVDSVLALPTLLG).

Belongs to the UbiA prenyltransferase family. Protoheme IX farnesyltransferase subfamily.

Its subcellular location is the cell membrane. The catalysed reaction is heme b + (2E,6E)-farnesyl diphosphate + H2O = Fe(II)-heme o + diphosphate. The protein operates within porphyrin-containing compound metabolism; heme O biosynthesis; heme O from protoheme: step 1/1. In terms of biological role, converts heme B (protoheme IX) to heme O by substitution of the vinyl group on carbon 2 of heme B porphyrin ring with a hydroxyethyl farnesyl side group. The sequence is that of Protoheme IX farnesyltransferase from Mycobacterium sp. (strain JLS).